Consider the following 252-residue polypeptide: Large ribosomal subunit protein uL3 (252 aa).

Gln-169 carries the N5-methylglutamine modification.

This sequence belongs to the universal ribosomal protein uL3 family. As to quaternary structure, part of the 50S ribosomal subunit. Forms a cluster with proteins L14 and L19. Post-translationally, methylated by PrmB.

One of the primary rRNA binding proteins, it binds directly near the 3'-end of the 23S rRNA, where it nucleates assembly of the 50S subunit. In Hyphomonas neptunium (strain ATCC 15444), this protein is Large ribosomal subunit protein uL3.